Here is a 269-residue protein sequence, read N- to C-terminus: 3-methyl-2-oxobutanoate hydroxymethyltransferase (269 aa).

Residues Asp-48 and Asp-87 each contribute to the Mg(2+) site. Residues 48–49 (DS), Asp-87, and Lys-116 each bind 3-methyl-2-oxobutanoate. A Mg(2+)-binding site is contributed by Glu-118. The Proton acceptor role is filled by Glu-185.

Belongs to the PanB family. In terms of assembly, homodecamer; pentamer of dimers. It depends on Mg(2+) as a cofactor.

The protein resides in the cytoplasm. The enzyme catalyses 3-methyl-2-oxobutanoate + (6R)-5,10-methylene-5,6,7,8-tetrahydrofolate + H2O = 2-dehydropantoate + (6S)-5,6,7,8-tetrahydrofolate. Its pathway is cofactor biosynthesis; (R)-pantothenate biosynthesis; (R)-pantoate from 3-methyl-2-oxobutanoate: step 1/2. Catalyzes the reversible reaction in which hydroxymethyl group from 5,10-methylenetetrahydrofolate is transferred onto alpha-ketoisovalerate to form ketopantoate. In Campylobacter curvus (strain 525.92), this protein is 3-methyl-2-oxobutanoate hydroxymethyltransferase.